A 291-amino-acid polypeptide reads, in one-letter code: MRTGRIIKSLSGVYRVDSDGEMFDTKPRGLFRKKKFSPIVGDIVDFEIENVTEGYIQHVHERQNELKRPPVSNIDHLVIVMSAVEPDFSTQLVDRFLVIAHSYGLNPRIVVTKKDMASDSQIERIEKDLDVYRAIGYPVQFVGKNDNIETIFDEWGSGLAVLSGQSGVGKSTLLNAYRPDLAIETNQISKSLNRGKHTTRHVELFERKGGFVADTPGFSALDFDHIHKDEVKDYFLEIQEYGQGCKFRNCNHIKEPQCNVKAQVEAGNIAQFRYDHYVQLFEEIANRKERY.

The CP-type G domain maps to 63–221; it reads QNELKRPPVS…VADTPGFSAL (159 aa). GTP is bound by residues 112-115 and 164-172; these read TKKD and GQSGVGKST. Cys245, Cys250, His252, and Cys258 together coordinate Zn(2+).

It belongs to the TRAFAC class YlqF/YawG GTPase family. RsgA subfamily. In terms of assembly, monomer. Associates with 30S ribosomal subunit, binds 16S rRNA. Requires Zn(2+) as cofactor.

It is found in the cytoplasm. One of several proteins that assist in the late maturation steps of the functional core of the 30S ribosomal subunit. Helps release RbfA from mature subunits. May play a role in the assembly of ribosomal proteins into the subunit. Circularly permuted GTPase that catalyzes slow GTP hydrolysis, GTPase activity is stimulated by the 30S ribosomal subunit. This chain is Small ribosomal subunit biogenesis GTPase RsgA, found in Staphylococcus carnosus (strain TM300).